The primary structure comprises 318 residues: Ubiquitin-conjugating enzyme E2 J1 (318 aa).

The Cytoplasmic segment spans residues 1 to 282 (METRYNLKSP…QGHQPRDNHT (282 aa)). One can recognise a UBC core domain in the interval 10–160 (PAVKRLMKEA…GCGSAMKDVL (151 aa)). Residue Cys-91 is the Glycyl thioester intermediate of the active site. A Phosphoserine; by MAPKAPK2 modification is found at Ser-184. Residues 229–248 (LQNSSAASFHQPTQPVAKNT) show a composition bias toward polar residues. Positions 229–283 (LQNSSAASFHQPTQPVAKNTSMSPRQRRAQQQSQRRLSTSPDVIQGHQPRDNHTD) are disordered. The segment covering 249–268 (SMSPRQRRAQQQSQRRLSTS) has biased composition (low complexity). 2 positions are modified to phosphoserine: Ser-266 and Ser-268. A helical; Anchor for type IV membrane protein membrane pass occupies residues 283-303 (DHGGSAVLIVILTLALAALIF). The Lumenal portion of the chain corresponds to 304–318 (RRIYLANEYIFDFEL).

This sequence belongs to the ubiquitin-conjugating enzyme family. As to quaternary structure, component of the HRD1 complex, which comprises at least SYNV1/HRD1, DERL1/2, FAM8A1, HERPUD1/HERP, OS9, SEL1L and UBE2J1. Interacts with E3 ligase RNF26. Interacts with E3 ligase RNF133. Phosphorylated at Ser-184 in a cytosolic stress-dependent manner by MAP kinase p38 MAPKAPK2. In terms of processing, phosphorylated UBE2J1 is rapidly ubiquitinated and subsequently degraded by the proteasome. Expressed in testes.

Its subcellular location is the endoplasmic reticulum membrane. The catalysed reaction is S-ubiquitinyl-[E1 ubiquitin-activating enzyme]-L-cysteine + [E2 ubiquitin-conjugating enzyme]-L-cysteine = [E1 ubiquitin-activating enzyme]-L-cysteine + S-ubiquitinyl-[E2 ubiquitin-conjugating enzyme]-L-cysteine.. It participates in protein modification; protein ubiquitination. In terms of biological role, catalyzes the covalent attachment of ubiquitin to other proteins. Functions in the selective degradation of misfolded membrane proteins from the endoplasmic reticulum (ERAD) and is essential for cells to recover from ER stress. Plays a role in MAPKAPK2-dependent translational control of TNF-alpha synthesis. Also acts as a platform for perinuclear positioning of the endosomal system by mediating ubiquitination of SQSTM1 through interaction with the E3 ubiquitin-protein ligase RNF26. Plays a role in male fecundity through the interaction with the E3 ubiquitin-protein ligase RNF133. (Microbial infection) Promotes Dengue virus RNA replication by negatively regulating IFN-beta signaling and mediating 'Lys-48'-linked ubiquitination on IRF3. The protein is Ubiquitin-conjugating enzyme E2 J1 of Homo sapiens (Human).